We begin with the raw amino-acid sequence, 355 residues long: Peptide chain release factor 1 (355 aa).

Residue Q231 is modified to N5-methylglutamine.

The protein belongs to the prokaryotic/mitochondrial release factor family. Methylated by PrmC. Methylation increases the termination efficiency of RF1.

It is found in the cytoplasm. Peptide chain release factor 1 directs the termination of translation in response to the peptide chain termination codons UAG and UAA. This Nautilia profundicola (strain ATCC BAA-1463 / DSM 18972 / AmH) protein is Peptide chain release factor 1.